The primary structure comprises 254 residues: Phosphoribosylaminoimidazole-succinocarboxamide synthase (254 aa).

This sequence belongs to the SAICAR synthetase family.

It carries out the reaction 5-amino-1-(5-phospho-D-ribosyl)imidazole-4-carboxylate + L-aspartate + ATP = (2S)-2-[5-amino-1-(5-phospho-beta-D-ribosyl)imidazole-4-carboxamido]succinate + ADP + phosphate + 2 H(+). The protein operates within purine metabolism; IMP biosynthesis via de novo pathway; 5-amino-1-(5-phospho-D-ribosyl)imidazole-4-carboxamide from 5-amino-1-(5-phospho-D-ribosyl)imidazole-4-carboxylate: step 1/2. The polypeptide is Phosphoribosylaminoimidazole-succinocarboxamide synthase (Sinorhizobium fredii (strain NBRC 101917 / NGR234)).